Here is a 220-residue protein sequence, read N- to C-terminus: Ribosome maturation factor RimP (220 aa).

Positions 173–220 (KKDKEERRQRKKARRRGEKGGVGDDGTAGEEQPDSAREGPARSASEGE) are disordered.

This sequence belongs to the RimP family.

It localises to the cytoplasm. In terms of biological role, required for maturation of 30S ribosomal subunits. This is Ribosome maturation factor RimP from Chelativorans sp. (strain BNC1).